The sequence spans 352 residues: Farnesyl pyrophosphate synthase (352 aa).

The isopentenyl diphosphate site is built by K52, R55, and Q93. Mg(2+)-binding residues include D100 and D104. R109 contacts dimethylallyl diphosphate. R110 contacts isopentenyl diphosphate. The dimethylallyl diphosphate site is built by K197, T198, Q237, K254, and K263.

It belongs to the FPP/GGPP synthase family. Mg(2+) serves as cofactor.

It catalyses the reaction isopentenyl diphosphate + dimethylallyl diphosphate = (2E)-geranyl diphosphate + diphosphate. It carries out the reaction isopentenyl diphosphate + (2E)-geranyl diphosphate = (2E,6E)-farnesyl diphosphate + diphosphate. It participates in isoprenoid biosynthesis; farnesyl diphosphate biosynthesis; farnesyl diphosphate from geranyl diphosphate and isopentenyl diphosphate: step 1/1. It functions in the pathway isoprenoid biosynthesis; geranyl diphosphate biosynthesis; geranyl diphosphate from dimethylallyl diphosphate and isopentenyl diphosphate: step 1/1. Its function is as follows. Farnesyl pyrophosphate synthase; part of the second module of ergosterol biosynthesis pathway that includes the middle steps of the pathway. ERG20 catalyzes the sequential condensation of isopentenyl pyrophosphate with dimethylallyl pyrophosphate, and then with the resultant geranylpyrophosphate to the ultimate product farnesyl pyrophosphate. The second module is carried out in the vacuole and involves the formation of farnesyl diphosphate, which is also an important intermediate in the biosynthesis of ubiquinone, dolichol, heme and prenylated proteins. Activity by the mevalonate kinase ERG12 first converts mevalonate into 5-phosphomevalonate. 5-phosphomevalonate is then further converted to 5-diphosphomevalonate by the phosphomevalonate kinase ERG8. The diphosphomevalonate decarboxylase MVD1/ERG19 then produces isopentenyl diphosphate. The isopentenyl-diphosphate delta-isomerase IDI1 then catalyzes the 1,3-allylic rearrangement of the homoallylic substrate isopentenyl (IPP) to its highly electrophilic allylic isomer, dimethylallyl diphosphate (DMAPP). Finally the farnesyl diphosphate synthase ERG20 catalyzes the sequential condensation of isopentenyl pyrophosphate with dimethylallyl pyrophosphate, and then with the resultant geranylpyrophosphate to the ultimate product farnesyl pyrophosphate. The chain is Farnesyl pyrophosphate synthase (ERG20) from Saccharomyces cerevisiae (strain ATCC 204508 / S288c) (Baker's yeast).